The following is a 418-amino-acid chain: Glutamyl-tRNA reductase (418 aa).

Substrate-binding positions include 49 to 52 (TCNR), serine 108, 113 to 115 (EPQ), and glutamine 119. The active-site Nucleophile is cysteine 50. 188 to 193 (GAGETI) contributes to the NADP(+) binding site.

This sequence belongs to the glutamyl-tRNA reductase family. As to quaternary structure, homodimer.

It catalyses the reaction (S)-4-amino-5-oxopentanoate + tRNA(Glu) + NADP(+) = L-glutamyl-tRNA(Glu) + NADPH + H(+). It functions in the pathway porphyrin-containing compound metabolism; protoporphyrin-IX biosynthesis; 5-aminolevulinate from L-glutamyl-tRNA(Glu): step 1/2. In terms of biological role, catalyzes the NADPH-dependent reduction of glutamyl-tRNA(Glu) to glutamate 1-semialdehyde (GSA). This is Glutamyl-tRNA reductase from Aliivibrio fischeri (strain ATCC 700601 / ES114) (Vibrio fischeri).